The primary structure comprises 503 residues: Glycerol kinase (503 aa).

Threonine 14 lines the ADP pocket. Residues threonine 14, threonine 15, and serine 16 each contribute to the ATP site. Threonine 14 provides a ligand contact to sn-glycerol 3-phosphate. Arginine 18 serves as a coordination point for ADP. Arginine 84, glutamate 85, tyrosine 136, and aspartate 246 together coordinate sn-glycerol 3-phosphate. Glycerol-binding residues include arginine 84, glutamate 85, tyrosine 136, aspartate 246, and glutamine 247. Positions 268 and 311 each coordinate ADP. Residues threonine 268, glycine 311, glutamine 315, and glycine 412 each coordinate ATP. The ADP site is built by glycine 412 and asparagine 416.

The protein belongs to the FGGY kinase family.

The catalysed reaction is glycerol + ATP = sn-glycerol 3-phosphate + ADP + H(+). Its pathway is polyol metabolism; glycerol degradation via glycerol kinase pathway; sn-glycerol 3-phosphate from glycerol: step 1/1. With respect to regulation, inhibited by fructose 1,6-bisphosphate (FBP). Key enzyme in the regulation of glycerol uptake and metabolism. Catalyzes the phosphorylation of glycerol to yield sn-glycerol 3-phosphate. The sequence is that of Glycerol kinase from Haemophilus influenzae (strain PittGG).